The chain runs to 225 residues: Nucleolar protein 6 (225 aa).

The disordered stretch occupies residues 1 to 75 (MGSEEDKKLT…GGKGKNGKKG (75 aa)). Residues 9–20 (LTKKQLKAQQFR) are compositionally biased toward basic residues. Basic and acidic residues predominate over residues 21–42 (KSKEEKDQEKDVKKEQAPEGKR). Serine 45 is modified (phosphoserine). Residues 56–75 (KKKRKTRRGRGGKGKNGKKG) are compositionally biased toward basic residues. In terms of domain architecture, RRM spans 78–155 (FIVFVGSLPR…KKINVELTVG (78 aa)). Serine 160 carries the post-translational modification Phosphoserine. Positions 187–225 (NDGNQKKIAKTTATAAQTSGTDNKPVPAGIHPDRAKLLK) are disordered.

It belongs to the RRM NOP6 family.

It is found in the nucleus. The protein localises to the nucleolus. Predicted to be involved in rRNA processing. The sequence is that of Nucleolar protein 6 (NOP6) from Saccharomyces cerevisiae (strain ATCC 204508 / S288c) (Baker's yeast).